The chain runs to 105 residues: Met repressor (105 aa).

It belongs to the MetJ family. In terms of assembly, homodimer.

It localises to the cytoplasm. Its function is as follows. This regulatory protein, when combined with SAM (S-adenosylmethionine) represses the expression of the methionine regulon and of enzymes involved in SAM synthesis. In Yersinia pestis bv. Antiqua (strain Antiqua), this protein is Met repressor.